The chain runs to 262 residues: Small ribosomal subunit protein eS1 (262 aa).

Belongs to the eukaryotic ribosomal protein eS1 family. Component of the small ribosomal subunit. Mature ribosomes consist of a small (40S) and a large (60S) subunit. The 40S subunit contains about 33 different proteins and 1 molecule of RNA (18S). The 60S subunit contains about 49 different proteins and 3 molecules of RNA (25S, 5.8S and 5S).

It is found in the cytoplasm. In Theileria parva (East coast fever infection agent), this protein is Small ribosomal subunit protein eS1.